Consider the following 281-residue polypeptide: Mad-like protein 1 (281 aa).

The span at 71–80 shows a compositional bias: low complexity; that stretch reads SCASNASTSS. Positions 71 to 105 are disordered; it reads SCASNASTSSQPYCSSPPARKSSKHSRTAHNELEK. The basic motif stretch occupies residues 95 to 108; it reads HSRTAHNELEKTRR. The 53-residue stretch at 95–147 folds into the bHLH domain; sequence HSRTAHNELEKTRRANLRGCLETLKMLVPCVSDATRNTTLALLTRARDHIIEL. Residues 109 to 147 are helix-loop-helix motif; that stretch reads ANLRGCLETLKMLVPCVSDATRNTTLALLTRARDHIIEL. Residues 144–185 adopt a coiled-coil conformation; it reads IIELQDSNAAQMKKLNDLRDEQDELVAELAQLQADEEVAQAT. The interval 189 to 213 is disordered; it reads CQTLSQSRPESRASSFTSTSSRDSP. Low complexity predominate over residues 200–212; it reads RASSFTSTSSRDS.

Forms heterodimer with mxl-1 in the presence and absence of DNA. Ubiquitinated. In terms of tissue distribution, expressed in intestinal cells in adults. Expressed in D-type motor neuron cell bodies.

Its subcellular location is the nucleus. In terms of biological role, transcriptional regulator which binds to the E box motif 5'-CACGTG-3', when in a heterodimeric complex with mxl-1. Involved in the control of lifespan in response to dietary restriction, the decline in protein homeostasis associated with normal aging, germline signaling and may overlap with the insulin-like signaling pathway. Plays a role in autophagy. Involved in promoting infection by the microsporidian pathogen N.parisii, possibly together with transcription factors pha-4 and zip-10. In response to neuronal injury, mdl-1 is targeted by sdz-33 for ubiquitin-mediated degradation, probably thereby reducing levels of mdl-1-mxl-1 heterodimers, allowing free mxl-1 to form complexes with tdpt-1 and thus inhibiting tdpt-1-dependent sumoylation of ets-4. This chain is Mad-like protein 1, found in Caenorhabditis elegans.